A 353-amino-acid chain; its full sequence is Alanine racemase (353 aa).

K33 (proton acceptor; specific for D-alanine) is an active-site residue. K33 carries the N6-(pyridoxal phosphate)lysine modification. Residue R129 coordinates substrate. Y250 serves as the catalytic Proton acceptor; specific for L-alanine. M298 contributes to the substrate binding site.

The protein belongs to the alanine racemase family. It depends on pyridoxal 5'-phosphate as a cofactor.

The catalysed reaction is L-alanine = D-alanine. The protein operates within amino-acid biosynthesis; D-alanine biosynthesis; D-alanine from L-alanine: step 1/1. Functionally, catalyzes the interconversion of L-alanine and D-alanine. May also act on other amino acids. The polypeptide is Alanine racemase (alr) (Aromatoleum aromaticum (strain DSM 19018 / LMG 30748 / EbN1) (Azoarcus sp. (strain EbN1))).